Here is a 360-residue protein sequence, read N- to C-terminus: tRNA (guanine(9)-N1)-methyltransferase (360 aa).

A disordered region spans residues 1 to 77; that stretch reads MENQDTEQSQ…RRKERIKEAE (77 aa). 2 stretches are compositionally biased toward basic and acidic residues: residues 8–24 and 33–55; these read QSQK…DFKR and MTKR…DEYK. Residues 56 to 67 show a composition bias toward basic residues; sequence QKKREKKKAARE. Basic and acidic residues predominate over residues 68-77; sequence RRKERIKEAE. The SAM-dependent MTase TRM10-type domain occupies 94 to 293; it reads RAKVAPQEQI…EVLPPRKVKG (200 aa). S-adenosyl-L-methionine-binding positions include 199 to 200, Gly219, 223 to 227, Cys231, Leu245, and 257 to 259; these read LT, DKNRY, and QVL. Asp223 (proton acceptor) is an active-site residue. The interval 291 to 360 is disordered; the sequence is VKGKLTHGSD…SDEPSKGADH (70 aa). The span at 297-306 shows a compositional bias: basic and acidic residues; it reads HGSDPEKSIE. Residues 307–324 are compositionally biased toward low complexity; it reads PSEVSEQPVSSEQSEQPV. Polar residues predominate over residues 328–343; the sequence is QPVSSEQPVLSEQPVL.

This sequence belongs to the class IV-like SAM-binding methyltransferase superfamily. TRM10 family. Monomer.

It is found in the cytoplasm. Its subcellular location is the nucleus. It catalyses the reaction guanosine(9) in tRNA + S-adenosyl-L-methionine = N(1)-methylguanosine(9) in tRNA + S-adenosyl-L-homocysteine + H(+). In terms of biological role, S-adenosyl-L-methionine-dependent guanine N(1)-methyltransferase that catalyzes the formation of N(1)-methylguanine at position 9 (m1G9) in cytoplasmic tRNA. The chain is tRNA (guanine(9)-N1)-methyltransferase from Debaryomyces hansenii (strain ATCC 36239 / CBS 767 / BCRC 21394 / JCM 1990 / NBRC 0083 / IGC 2968) (Yeast).